A 459-amino-acid polypeptide reads, in one-letter code: Kelch-like protein terF (459 aa).

Kelch repeat units follow at residues 92-144, 145-196, 198-248, 251-304, 306-354, and 355-405; these read STVV…LVGD, EIFV…VVDG, IYYL…TVVV, TIYL…IYRD, LYIL…TIGS, and LIFT…VYKG.

It functions in the pathway secondary metabolite biosynthesis. In terms of biological role, kelch-like protein; part of the gene cluster that mediates the biosynthesis of terrein, a fungal metabolite with ecological, antimicrobial, antiproliferative, and antioxidative activities. The first step in the pathway is performed by the polyketide synthase terA that produces 4-hydroxy-6-methylpyranon (4-HMP), orsellinic acid (OA), and 2,3-dehydro-6-hydroxymellein (2,3-dehydro-6-HM) by condensing acetyl-CoA with two, three, or four malonyl-CoA units, respectively. 4-HMP and OA are not pathway intermediates, but are rather shunt or side products. 2,3-dehydro-6-HM is further converted to 6-hydroxymellein (6-HM) by the 6-hydroxymellein synthase terB. The monooxygenases terC and terD, the multicopper oxidase terE and the Kelch-like protein terF are then involved in the transformation of 6-HM to terrein. Even if they are co-regulated with the other terrein cluster genes, terH and terI seem to be dispensable for terrein production; whereas one or both of the 2 transporters terG and terJ are probably required for efficient secretion of metabolites. The protein is Kelch-like protein terF of Aspergillus terreus (strain NIH 2624 / FGSC A1156).